The sequence spans 167 residues: MNLPAKTFVILCILFLLDLCFSYIRHEWHSQNALQDMPVPSDLHPIVKQNADALKAAAANKGIDVVITEGFRSFKEQDELYKQGRTKKGNIVTYARGGESYHNYGLAIDFALQKKDGSIIWDMEYDGNQNGKSDWLEVVEIAKTLGFEWGGDWKRFKDYPHLEMIPN.

The N-terminal stretch at 1 to 26 is a signal peptide; sequence MNLPAKTFVILCILFLLDLCFSYIRH.

This sequence belongs to the peptidase M15C family.

Its subcellular location is the cell membrane. Cleaves the linkage of the L-alanine-D-glutamic acid of B.subtilis cell wall. In Bacillus subtilis (strain 168), this protein is Peptidoglycan L-alanyl-D-glutamate endopeptidase CwlK (cwlK).